Here is a 359-residue protein sequence, read N- to C-terminus: DNA-directed RNA polymerase RPB3-11 homolog (359 aa).

This sequence in the N-terminal section; belongs to the archaeal RpoD/eukaryotic RPB3 RNA polymerase subunit family. In the C-terminal section; belongs to the archaeal RpoL/eukaryotic RPB11/RPC19 RNA polymerase subunit family. Part of the viral DNA-directed RNA polymerase that consists of 8 polII-like subunits (RPB1, RPB2, RPB3, RPB5, RPB6, RPB7, RPB9, RPB10), a capping enzyme and a termination factor.

It localises to the host cytoplasm. The protein localises to the virion. Component of the DNA-directed RNA polymerase (RNAP) that catalyzes the transcription in the cytoplasm of viral DNA into RNA using the four ribonucleoside triphosphates as substrates. This is DNA-directed RNA polymerase RPB3-11 homolog from Ornithodoros (relapsing fever ticks).